A 379-amino-acid chain; its full sequence is UDP-4-amino-4-deoxy-L-arabinose--oxoglutarate aminotransferase (379 aa).

Position 182 is an N6-(pyridoxal phosphate)lysine (Lys182).

The protein belongs to the DegT/DnrJ/EryC1 family. ArnB subfamily. In terms of assembly, homodimer. Pyridoxal 5'-phosphate is required as a cofactor.

The enzyme catalyses UDP-4-amino-4-deoxy-beta-L-arabinose + 2-oxoglutarate = UDP-beta-L-threo-pentopyranos-4-ulose + L-glutamate. It participates in nucleotide-sugar biosynthesis; UDP-4-deoxy-4-formamido-beta-L-arabinose biosynthesis; UDP-4-deoxy-4-formamido-beta-L-arabinose from UDP-alpha-D-glucuronate: step 2/3. Its pathway is bacterial outer membrane biogenesis; lipopolysaccharide biosynthesis. In terms of biological role, catalyzes the conversion of UDP-4-keto-arabinose (UDP-Ara4O) to UDP-4-amino-4-deoxy-L-arabinose (UDP-L-Ara4N). The modified arabinose is attached to lipid A and is required for resistance to polymyxin and cationic antimicrobial peptides. The chain is UDP-4-amino-4-deoxy-L-arabinose--oxoglutarate aminotransferase from Salmonella dublin (strain CT_02021853).